A 593-amino-acid polypeptide reads, in one-letter code: Proline--tRNA ligase (593 aa).

This sequence belongs to the class-II aminoacyl-tRNA synthetase family. ProS type 1 subfamily. In terms of assembly, homodimer.

It is found in the cytoplasm. It catalyses the reaction tRNA(Pro) + L-proline + ATP = L-prolyl-tRNA(Pro) + AMP + diphosphate. Catalyzes the attachment of proline to tRNA(Pro) in a two-step reaction: proline is first activated by ATP to form Pro-AMP and then transferred to the acceptor end of tRNA(Pro). As ProRS can inadvertently accommodate and process non-cognate amino acids such as alanine and cysteine, to avoid such errors it has two additional distinct editing activities against alanine. One activity is designated as 'pretransfer' editing and involves the tRNA(Pro)-independent hydrolysis of activated Ala-AMP. The other activity is designated 'posttransfer' editing and involves deacylation of mischarged Ala-tRNA(Pro). The misacylated Cys-tRNA(Pro) is not edited by ProRS. In Synechococcus sp. (strain CC9605), this protein is Proline--tRNA ligase.